The sequence spans 958 residues: SLIT and NTRK-like protein 5 (958 aa).

Positions 1 to 40 (MHTCCPPVTLEQDLHRKMHSWMLQTLAFAVTSLVLSCAET) are cleaved as a signal peptide. Topologically, residues 41–664 (IDYYGEICDN…GGGASSVPLS (624 aa)) are extracellular. 6 LRR repeats span residues 82 to 103 (PIYH…EFVN), 106 to 127 (GASI…AFHG), 130 to 151 (GLRR…TFLG), 154 to 175 (NLEY…AFGK), 178 to 199 (LLQV…LFRF), and 201 to 222 (PLTH…GLLQ). Asn103 carries an N-linked (GlcNAc...) asparagine glycan. The LRRCT 1 domain maps to 235-286 (NPWNCSCELISLKDWLDSISYSALVGDVVCETPFRLHGRDLDEVSKQELCPR). The tract at residues 317–358 (ATSSSAVYKPPLKPPKGTRQPNKPRVRPTSRQPSKDLGYSNY) is disordered. The LRRNT domain occupies 365 to 407 (QTKSPVPLECPTACSCNLQISDLGLNVNCQERKIESIAELQPK). 6 LRR repeats span residues 410 to 431 (NPKK…DFLE), 434 to 455 (GLDL…AFGD), 458 to 479 (NLRR…LFYG), 482 to 503 (SLQY…TFDP), 506 to 527 (NLQL…VFSG), and 529 to 550 (TLLR…GVLD). The LRRCT 2 domain maps to 563–614 (NPWDCTCDIVGMKLWVEQLKVGVLVDEVICKAPKKFAETDMRSIKSELLCPD). Residue Asn644 is glycosylated (N-linked (GlcNAc...) asparagine). A helical membrane pass occupies residues 665-685 (VLILSLLLVFIMSVFVAAGLF). The Cytoplasmic segment spans residues 686-958 (VLVMKRRKKN…LEKQTTFSQF (273 aa)). A disordered region spans residues 789–844 (NHHLQQQQQPPPPPQQPQQQPPPQLQLQPGEEERRESHHLRSPAYSVSTIEPREDL). The span at 797–812 (QPPPPPQQPQQQPPPQ) shows a compositional bias: pro residues.

It belongs to the SLITRK family. As to expression, expressed predominantly in the cerebral cortex of the brain but also at low levels in the spinal cord and medulla.

The protein resides in the membrane. In terms of biological role, suppresses neurite outgrowth. In Homo sapiens (Human), this protein is SLIT and NTRK-like protein 5 (SLITRK5).